Reading from the N-terminus, the 208-residue chain is Ribosomal RNA large subunit methyltransferase E (208 aa).

S-adenosyl-L-methionine is bound by residues G63, W65, D83, D99, and D124. K164 functions as the Proton acceptor in the catalytic mechanism.

It belongs to the class I-like SAM-binding methyltransferase superfamily. RNA methyltransferase RlmE family.

The protein localises to the cytoplasm. The catalysed reaction is uridine(2552) in 23S rRNA + S-adenosyl-L-methionine = 2'-O-methyluridine(2552) in 23S rRNA + S-adenosyl-L-homocysteine + H(+). In terms of biological role, specifically methylates the uridine in position 2552 of 23S rRNA at the 2'-O position of the ribose in the fully assembled 50S ribosomal subunit. The chain is Ribosomal RNA large subunit methyltransferase E from Hamiltonella defensa subsp. Acyrthosiphon pisum (strain 5AT).